Consider the following 367-residue polypeptide: 4-hydroxy-3-methylbut-2-en-1-yl diphosphate synthase (flavodoxin) (367 aa).

[4Fe-4S] cluster contacts are provided by Cys265, Cys268, Cys300, and Glu307.

Belongs to the IspG family. [4Fe-4S] cluster serves as cofactor.

The catalysed reaction is (2E)-4-hydroxy-3-methylbut-2-enyl diphosphate + oxidized [flavodoxin] + H2O + 2 H(+) = 2-C-methyl-D-erythritol 2,4-cyclic diphosphate + reduced [flavodoxin]. Its pathway is isoprenoid biosynthesis; isopentenyl diphosphate biosynthesis via DXP pathway; isopentenyl diphosphate from 1-deoxy-D-xylulose 5-phosphate: step 5/6. Its function is as follows. Converts 2C-methyl-D-erythritol 2,4-cyclodiphosphate (ME-2,4cPP) into 1-hydroxy-2-methyl-2-(E)-butenyl 4-diphosphate. This Bacillus cereus (strain ATCC 10987 / NRS 248) protein is 4-hydroxy-3-methylbut-2-en-1-yl diphosphate synthase (flavodoxin).